The primary structure comprises 339 residues: tRNA-specific 2-thiouridylase MnmA (339 aa).

ATP is bound by residues 6–13 and methionine 32; that span reads AMSGGVDS. The Nucleophile role is filled by cysteine 92. A disulfide bridge links cysteine 92 with cysteine 186. Glycine 116 lines the ATP pocket. An interaction with tRNA region spans residues 134–136; the sequence is KDQ. Residue cysteine 186 is the Cysteine persulfide intermediate of the active site. The tract at residues 288–289 is interaction with tRNA; the sequence is RY.

The protein belongs to the MnmA/TRMU family.

Its subcellular location is the cytoplasm. The catalysed reaction is S-sulfanyl-L-cysteinyl-[protein] + uridine(34) in tRNA + AH2 + ATP = 2-thiouridine(34) in tRNA + L-cysteinyl-[protein] + A + AMP + diphosphate + H(+). In terms of biological role, catalyzes the 2-thiolation of uridine at the wobble position (U34) of tRNA, leading to the formation of s(2)U34. The chain is tRNA-specific 2-thiouridylase MnmA from Campylobacter curvus (strain 525.92).